The chain runs to 196 residues: Small ribosomal subunit protein uS4c (196 aa).

Positions 89 to 149 constitute an S4 RNA-binding domain; that stretch reads MRLDNILFRL…DKQRSKALIQ (61 aa).

This sequence belongs to the universal ribosomal protein uS4 family. As to quaternary structure, part of the 30S ribosomal subunit. Contacts protein S5. The interaction surface between S4 and S5 is involved in control of translational fidelity.

The protein localises to the plastid. Its subcellular location is the chloroplast. Functionally, one of the primary rRNA binding proteins, it binds directly to 16S rRNA where it nucleates assembly of the body of the 30S subunit. In terms of biological role, with S5 and S12 plays an important role in translational accuracy. The protein is Small ribosomal subunit protein uS4c (rps4) of Asparagus maritimus (Sea asparagus).